Consider the following 291-residue polypeptide: MMRILLFLATNLAVLVIASITLKLLGVDRFTGQNYGSLLVFCAVFGFAGSLVSLFISKWMAKMSTGTEVISQPRTRHEQWLLQTVEELSREAGIKMPEVGIFPAYEANAFATGWNKNDALVAVSQGLLERFSPDEVKAVLAHEIGHVANGDMVTLALIQGVVNTFVMFFARIFGNFVDKAILKNEDGPGIGYFVATIFAELVLGILASIIVMWFSRRREFRADAAGAHLAGTGAMIAALQRLRSEQGVPVQMPDTLNAFGINGGLKHGLAGLLMSHPPLEDRIEALRASAR.

The next 2 helical transmembrane spans lie at 4–24 (ILLF…TLKL) and 36–56 (GSLL…SLFI). A Zn(2+)-binding site is contributed by His142. Glu143 is an active-site residue. His146 is a binding site for Zn(2+). The next 2 membrane-spanning stretches (helical) occupy residues 150–170 (GDMV…MFFA) and 193–213 (FVAT…IVMW). Glu219 provides a ligand contact to Zn(2+).

Belongs to the peptidase M48B family. Zn(2+) serves as cofactor.

The protein localises to the cell inner membrane. The protein is Protease HtpX of Pseudomonas aeruginosa (strain LESB58).